Here is a 462-residue protein sequence, read N- to C-terminus: EPD1-interacting receptor-like cytoplasmic serine/threonine-protein kinase 5A (462 aa).

The region spanning 85–366 (FSSANFLGEG…DVVNILEPLL (282 aa)) is the Protein kinase domain. Residues 91 to 99 (LGEGGFGPV) and Lys-120 contribute to the ATP site. Residues Tyr-165 and Tyr-167 each carry the phosphotyrosine modification. Catalysis depends on Asp-215, which acts as the Proton acceptor.

This sequence belongs to the protein kinase superfamily. Ser/Thr protein kinase family. In terms of assembly, interacts with the Verticillium dahliae elicitor EPD1 (AC G2WWH6). In terms of processing, phosphorylated at Tyr-165 and Tyr-167 in the presence of pathogen-associated molecular patterns (PAMPs); this triggers the expression of pathogenesis-related genes (e.g. PR5 and PR16). As to expression, mostly expressed in roots and, to a lesser extent, in leaves.

The protein localises to the cell membrane. It catalyses the reaction L-seryl-[protein] + ATP = O-phospho-L-seryl-[protein] + ADP + H(+). The catalysed reaction is L-threonyl-[protein] + ATP = O-phospho-L-threonyl-[protein] + ADP + H(+). Required for pathogen-associated molecular pattern (PAMP, e.g. chitin and flg22)-triggered immunity (PTI) involving reactive oxygen species (ROS) accumulation and triggering plant defense, including defense-related gene expression (e.g. PR1 and LOX). Ensures specific recognition of the EPD1 effector of Verticillium dahliae, resulting in a hypersensitive response known as effector-triggered immunity (ETI), characterized by the activation of programmed cell death to limit infection by the pathogen. Priming plants with the incompatible pathogen V.dahliae leads to an increased resistance to compatible pathogens, as a result of systemic acquired resistance (SAR). The protein is EPD1-interacting receptor-like cytoplasmic serine/threonine-protein kinase 5A of Gossypium barbadense (Sea Island cotton).